The sequence spans 360 residues: D-xylose 1-dehydrogenase [NADP(+)] (360 aa).

This sequence belongs to the Gfo/Idh/MocA family. In terms of assembly, homotretramer.

It carries out the reaction D-xylofuranose + NADP(+) = D-xylono-1,4-lactone + NADPH + H(+). In terms of biological role, NADP-dependent D-xylose dehydrogenase involved in the degradation of D-xylose, a major component of hemicelluloses such as xylan. In addition to D-xylose, oxidizes D-ribose at similar kinetic constants, whereas D-glucose is oxidized with about 70-fold lower catalytic efficiency. This chain is D-xylose 1-dehydrogenase [NADP(+)] (gfo6), found in Haloarcula marismortui (strain ATCC 43049 / DSM 3752 / JCM 8966 / VKM B-1809) (Halobacterium marismortui).